Consider the following 324-residue polypeptide: Olfactory receptor 52I1 (324 aa).

The Extracellular portion of the chain corresponds to 1–29 (MLGPAYNHTMETPASFLLVGIPGLQSSHL). Asparagine 7 is a glycosylation site (N-linked (GlcNAc...) asparagine). Residues 30–50 (WLAISLSAMYITALLGNTLIV) traverse the membrane as a helical segment. Over 51–58 (TAIWMDST) the chain is Cytoplasmic. The helical transmembrane segment at 59–79 (RHEPMYCFLCVLAAVDIVMAS) threads the bilayer. The Extracellular segment spans residues 80–103 (SVVPKMVSIFCSGDSSISFSACFT). An intrachain disulfide couples cysteine 101 to cysteine 193. A helical transmembrane segment spans residues 104-124 (QMFFVHLATAVETGLLLTMAF). Residues 125-143 (DRYVAICKPLHYKRILTPQ) lie on the Cytoplasmic side of the membrane. Residues 144–164 (VMLGMSMAVTIRAVTFMTPLS) form a helical membrane-spanning segment. Topologically, residues 165 to 200 (WMMNHLPFCGSNVVVHSYCKHIALARLACADPVPSS) are extracellular. A helical membrane pass occupies residues 201-221 (LYSLIGSSLMVGSDVAFIAAS). Residues 222 to 241 (YILILRAVFDLSSKTAQLKA) lie on the Cytoplasmic side of the membrane. The chain crosses the membrane as a helical span at residues 242–262 (LSTCGSHVGVMALYYLPGMAS). At 263–278 (IYAAWLGQDIVPLHTQ) the chain is on the extracellular side. The helical transmembrane segment at 279-299 (VLLADLYVIIPATLNPIIYGM) threads the bilayer. Residues 300–324 (RTKQLLEGIWSYLMHFLFDHSNLGS) lie on the Cytoplasmic side of the membrane.

This sequence belongs to the G-protein coupled receptor 1 family.

The protein localises to the cell membrane. Functionally, odorant receptor. The chain is Olfactory receptor 52I1 (OR52I1) from Homo sapiens (Human).